A 90-amino-acid polypeptide reads, in one-letter code: Probable small nuclear ribonucleoprotein F (90 aa).

A Sm domain is found at 7–80; the sequence is NPRPFLQDLV…VLYIKKADEA (74 aa).

It belongs to the snRNP Sm proteins family. SmF/LSm6 subfamily.

The protein resides in the nucleus. The protein localises to the cytoplasm. In terms of biological role, plays a role in pre-mRNA splicing as a core component of the spliceosomal U1, U2, U4 and U5 small nuclear ribonucleoproteins (snRNPs), the building blocks of the spliceosome. The polypeptide is Probable small nuclear ribonucleoprotein F (Neurospora crassa (strain ATCC 24698 / 74-OR23-1A / CBS 708.71 / DSM 1257 / FGSC 987)).